The sequence spans 163 residues: Large ribosomal subunit protein uL10 (163 aa).

It belongs to the universal ribosomal protein uL10 family. In terms of assembly, part of the ribosomal stalk of the 50S ribosomal subunit. The N-terminus interacts with L11 and the large rRNA to form the base of the stalk. The C-terminus forms an elongated spine to which L12 dimers bind in a sequential fashion forming a multimeric L10(L12)X complex.

Forms part of the ribosomal stalk, playing a central role in the interaction of the ribosome with GTP-bound translation factors. The chain is Large ribosomal subunit protein uL10 from Haemophilus ducreyi (strain 35000HP / ATCC 700724).